The sequence spans 99 residues: Small ribosomal subunit protein bS20 (99 aa).

The protein belongs to the bacterial ribosomal protein bS20 family.

Its function is as follows. Binds directly to 16S ribosomal RNA. In Caldicellulosiruptor bescii (strain ATCC BAA-1888 / DSM 6725 / KCTC 15123 / Z-1320) (Anaerocellum thermophilum), this protein is Small ribosomal subunit protein bS20.